Consider the following 352-residue polypeptide: UDP-N-acetylglucosamine--N-acetylmuramyl-(pentapeptide) pyrophosphoryl-undecaprenol N-acetylglucosamine transferase 2 (352 aa).

UDP-N-acetyl-alpha-D-glucosamine-binding positions include 11–13 (SAG), R164, S194, and Q289.

It belongs to the glycosyltransferase 28 family. MurG subfamily.

The protein resides in the cell membrane. The catalysed reaction is di-trans,octa-cis-undecaprenyl diphospho-N-acetyl-alpha-D-muramoyl-L-alanyl-D-glutamyl-meso-2,6-diaminopimeloyl-D-alanyl-D-alanine + UDP-N-acetyl-alpha-D-glucosamine = di-trans,octa-cis-undecaprenyl diphospho-[N-acetyl-alpha-D-glucosaminyl-(1-&gt;4)]-N-acetyl-alpha-D-muramoyl-L-alanyl-D-glutamyl-meso-2,6-diaminopimeloyl-D-alanyl-D-alanine + UDP + H(+). The protein operates within cell wall biogenesis; peptidoglycan biosynthesis. Cell wall formation. Catalyzes the transfer of a GlcNAc subunit on undecaprenyl-pyrophosphoryl-MurNAc-pentapeptide (lipid intermediate I) to form undecaprenyl-pyrophosphoryl-MurNAc-(pentapeptide)GlcNAc (lipid intermediate II). The chain is UDP-N-acetylglucosamine--N-acetylmuramyl-(pentapeptide) pyrophosphoryl-undecaprenol N-acetylglucosamine transferase 2 from Bacillus thuringiensis subsp. konkukian (strain 97-27).